We begin with the raw amino-acid sequence, 148 residues long: Gas vesicle protein J (148 aa).

2 disordered regions span residues 1 to 21 (MTTT…VIPT) and 118 to 148 (EETT…QLEA). Over residues 136–148 (VNSQEGDNSQLEA) the composition is skewed to polar residues.

It belongs to the gas vesicle GvpA family. As to quaternary structure, interacts with GvpA.

The protein localises to the gas vesicle. Its function is as follows. A minor component of the gas vesicle, might be involved in nucleating gas vesicle formation. Gas vesicles (GV) are hollow, gas filled proteinaceous nanostructures. During planktonic growth they allow positioning of the organism at a favorable depth for light or nutrient acquisition. In terms of biological role, cluster expression in E.coli (gvpA1-gvpA2-gvpC-gvpN-gvpJ-gvpK-gvpF-gvpG-gvpV-gvpW) allows cells to float and produces irregularly shaped gas vesicles. In Nostoc sp. (strain PCC 7120 / SAG 25.82 / UTEX 2576), this protein is Gas vesicle protein J.